We begin with the raw amino-acid sequence, 246 residues long: Uridylate kinase (246 aa).

16 to 19 provides a ligand contact to ATP; the sequence is KLGG. G57 lines the UMP pocket. Residues G58 and R62 each coordinate ATP. Residues D77 and 138–145 contribute to the UMP site; that span reads MGMPYFST. Residues Y171 and D174 each coordinate ATP.

Belongs to the UMP kinase family. As to quaternary structure, homohexamer.

It is found in the cytoplasm. It carries out the reaction UMP + ATP = UDP + ADP. It participates in pyrimidine metabolism; CTP biosynthesis via de novo pathway; UDP from UMP (UMPK route): step 1/1. With respect to regulation, inhibited by UTP. Catalyzes the reversible phosphorylation of UMP to UDP. The protein is Uridylate kinase of Corynebacterium jeikeium (strain K411).